Here is a 60-residue protein sequence, read N- to C-terminus: Large ribosomal subunit protein uL30 (60 aa).

It belongs to the universal ribosomal protein uL30 family. In terms of assembly, part of the 50S ribosomal subunit.

In Aromatoleum aromaticum (strain DSM 19018 / LMG 30748 / EbN1) (Azoarcus sp. (strain EbN1)), this protein is Large ribosomal subunit protein uL30.